Consider the following 100-residue polypeptide: NADH-quinone oxidoreductase subunit K (100 aa).

Helical transmembrane passes span 1 to 21 (MIGL…GLAG), 28 to 48 (ILLL…GFVA), and 64 to 84 (FIIA…ILWF).

Belongs to the complex I subunit 4L family. NDH-1 is composed of 14 different subunits. Subunits NuoA, H, J, K, L, M, N constitute the membrane sector of the complex.

Its subcellular location is the cell inner membrane. The enzyme catalyses a quinone + NADH + 5 H(+)(in) = a quinol + NAD(+) + 4 H(+)(out). Functionally, NDH-1 shuttles electrons from NADH, via FMN and iron-sulfur (Fe-S) centers, to quinones in the respiratory chain. The immediate electron acceptor for the enzyme in this species is believed to be ubiquinone. Couples the redox reaction to proton translocation (for every two electrons transferred, four hydrogen ions are translocated across the cytoplasmic membrane), and thus conserves the redox energy in a proton gradient. The sequence is that of NADH-quinone oxidoreductase subunit K from Helicobacter pylori (strain Shi470).